The following is a 394-amino-acid chain: MVLLSILRILLLWGLVLFMEHRVQMTQVGQPSIAHLPEAPTLPLIQELLEEAPGKQQRKPRILGHPLRYMLELYQRSADASGHPRENRTIGATMVRLVRPLASVARPLRGSWHIQTLDFPLRPNRVAYQLVRATVVYRHQLHLTHSHLSCHVEPWVQKSPTNHFPSSGRGSSKPSLLPKAWTEMDIMEHVGQKLWNHKGRRVLRLRFVCQQPRGSEVREFWWHGTSSLDTVFLLLYFNDTQSVQKTKPLPKGLKEFTEKDPSLLLRRARQAGSIASEVPGPSREHDGPESNLCSLHPFQVSFQQLGWDHWIIAPHLYTPNYCKGVCPRVLHYGLNSPNHAIIQNLVNELVDQSVPQPSCVPYKYVPISILLIEANGSILYKEYEGMIAQSCTCR.

Residues 1 to 18 (MVLLSILRILLLWGLVLF) form the signal peptide. The propeptide occupies 19–269 (MEHRVQMTQV…DPSLLLRRAR (251 aa)). Residues asparagine 87 and asparagine 238 are each glycosylated (N-linked (GlcNAc...) asparagine). Intrachain disulfides connect cysteine 293-cysteine 359, cysteine 322-cysteine 391, and cysteine 326-cysteine 393. N-linked (GlcNAc...) asparagine glycosylation is present at asparagine 375.

This sequence belongs to the TGF-beta family. Homodimer or heterodimer (Potential). But, in contrast to other members of this family, cannot be disulfide-linked.

The protein resides in the secreted. In terms of biological role, may be involved in follicular development. Seems to be an oocyte-specific growth/differentiation factor that stimulates folliculogenesis and granulosa cell (GC) growth. The chain is Bone morphogenetic protein 15 (BMP15) from Bos taurus (Bovine).